A 136-amino-acid chain; its full sequence is Small ribosomal subunit protein bS6 (136 aa).

A compositionally biased stretch (basic and acidic residues) spans 97 to 128; it reads EKEQSAMLSRPDRDDFPGKDEERPRPSRRQYE. A disordered region spans residues 97–136; that stretch reads EKEQSAMLSRPDRDDFPGKDEERPRPSRRQYEDVVEGGVE.

The protein belongs to the bacterial ribosomal protein bS6 family.

Its function is as follows. Binds together with bS18 to 16S ribosomal RNA. The polypeptide is Small ribosomal subunit protein bS6 (Bartonella bacilliformis (strain ATCC 35685 / KC583 / Herrer 020/F12,63)).